We begin with the raw amino-acid sequence, 115 residues long: Parathyroid hormone (115 aa).

Residues 1–25 (MMSAKNMVKVMIVMFAIFLLAKSDG) form the signal peptide. A propeptide spanning residues 26–31 (KPVRKR) is cleaved from the precursor. Positions 51–69 (RVEWLRKKLQDVHNFIALG) are important for receptor binding. The disordered stretch occupies residues 73-115 (FHRDGGSQRPRKKEDNVLIESHQKSLGEADKADVDVLSKTKSQ).

Belongs to the parathyroid hormone family. Interacts with PTH1R (via N-terminal extracellular domain).

Its subcellular location is the secreted. Parathyroid hormone elevates calcium level by dissolving the salts in bone and preventing their renal excretion. Acts by binding to its receptor, PTH1R, activating G protein-coupled receptor signaling. Stimulates [1-14C]-2-deoxy-D-glucose (2DG) transport and glycogen synthesis in osteoblastic cells. This chain is Parathyroid hormone (PTH), found in Equus caballus (Horse).